The sequence spans 89 residues: uncharacterized protein (89 aa).

This is an uncharacterized protein from Escherichia coli (strain K12).